Here is a 319-residue protein sequence, read N- to C-terminus: Acetyl esterase (319 aa).

Positions 91–93 match the Involved in the stabilization of the negatively charged intermediate by the formation of the oxyanion hole motif; it reads HGG. Active-site residues include Ser-165, Asp-262, and His-292.

It belongs to the 'GDXG' lipolytic enzyme family. In terms of assembly, homodimer. Interacts with MalT and MelA.

The protein resides in the cytoplasm. Displays esterase activity towards short chain fatty esters (acyl chain length of up to 8 carbons). Able to hydrolyze triacetylglycerol (triacetin) and tributyrylglycerol (tributyrin), but not trioleylglycerol (triolein) or cholesterol oleate. Negatively regulates MalT activity by antagonizing maltotriose binding. Inhibits MelA galactosidase activity. The sequence is that of Acetyl esterase from Escherichia coli O6:H1 (strain CFT073 / ATCC 700928 / UPEC).